The sequence spans 596 residues: Aspartic proteinase yapsin-7 (596 aa).

The N-terminal stretch at 1–25 (MTCLILWYLWLISTFQLEFATASTA) is a signal peptide. Residues asparagine 26 and asparagine 59 are each glycosylated (N-linked (GlcNAc...) asparagine). The Lumenal portion of the chain corresponds to 26–575 (NTTTTAKSGT…SPYTFNKDPA (550 aa)). The Peptidase A1 domain occupies 56 to 440 (YYVNSTFGTP…DLEDNTIAIA (385 aa)). Residue aspartate 74 is part of the active site. 7 N-linked (GlcNAc...) asparagine glycosylation sites follow: asparagine 106, asparagine 131, asparagine 140, asparagine 143, asparagine 148, asparagine 175, and asparagine 308. The active site involves aspartate 321. N-linked (GlcNAc...) asparagine glycans are attached at residues asparagine 391, asparagine 455, asparagine 478, asparagine 484, asparagine 549, and asparagine 552. A helical membrane pass occupies residues 576–596 (GHVTRIASLLLLSIFSILIVL).

The protein belongs to the peptidase A1 family.

The protein localises to the cytoplasm. The protein resides in the endoplasmic reticulum membrane. In Saccharomyces cerevisiae (strain ATCC 204508 / S288c) (Baker's yeast), this protein is Aspartic proteinase yapsin-7 (YPS7).